We begin with the raw amino-acid sequence, 664 residues long: UvrABC system protein B (664 aa).

Positions 25-182 (KSFGEGKNKI…RKFLHIQYAR (158 aa)) constitute a Helicase ATP-binding domain. An ATP-binding site is contributed by 38–45 (GVTGSGKT). Positions 91–114 (YYDYYQPEAYVPSSDTFIEKDMSM) match the Beta-hairpin motif. Positions 429–595 (QIEDLLNEIR…TIQKEIHDIL (167 aa)) constitute a Helicase C-terminal domain. Positions 625-660 (DKLREALKREMLRYANDMDFEKAAMFRDKMLALGPD) constitute a UVR domain.

The protein belongs to the UvrB family. Forms a heterotetramer with UvrA during the search for lesions. Interacts with UvrC in an incision complex.

The protein localises to the cytoplasm. Its function is as follows. The UvrABC repair system catalyzes the recognition and processing of DNA lesions. A damage recognition complex composed of 2 UvrA and 2 UvrB subunits scans DNA for abnormalities. Upon binding of the UvrA(2)B(2) complex to a putative damaged site, the DNA wraps around one UvrB monomer. DNA wrap is dependent on ATP binding by UvrB and probably causes local melting of the DNA helix, facilitating insertion of UvrB beta-hairpin between the DNA strands. Then UvrB probes one DNA strand for the presence of a lesion. If a lesion is found the UvrA subunits dissociate and the UvrB-DNA preincision complex is formed. This complex is subsequently bound by UvrC and the second UvrB is released. If no lesion is found, the DNA wraps around the other UvrB subunit that will check the other stand for damage. In Leptospira biflexa serovar Patoc (strain Patoc 1 / Ames), this protein is UvrABC system protein B.